The following is a 383-amino-acid chain: 1-deoxy-D-xylulose 5-phosphate reductoisomerase (383 aa).

NADPH is bound by residues T10, G11, S12, I13, G36, K37, N38, and N122. K123 provides a ligand contact to 1-deoxy-D-xylulose 5-phosphate. E124 lines the NADPH pocket. Residue D148 participates in Mn(2+) binding. 1-deoxy-D-xylulose 5-phosphate is bound by residues S149, E150, S174, and H197. Residue E150 participates in Mn(2+) binding. Position 203 (G203) interacts with NADPH. 1-deoxy-D-xylulose 5-phosphate is bound by residues S210, N215, K216, and E219. E219 contacts Mn(2+).

The protein belongs to the DXR family. The cofactor is Mg(2+). Mn(2+) is required as a cofactor.

It catalyses the reaction 2-C-methyl-D-erythritol 4-phosphate + NADP(+) = 1-deoxy-D-xylulose 5-phosphate + NADPH + H(+). It functions in the pathway isoprenoid biosynthesis; isopentenyl diphosphate biosynthesis via DXP pathway; isopentenyl diphosphate from 1-deoxy-D-xylulose 5-phosphate: step 1/6. Its function is as follows. Catalyzes the NADPH-dependent rearrangement and reduction of 1-deoxy-D-xylulose-5-phosphate (DXP) to 2-C-methyl-D-erythritol 4-phosphate (MEP). The polypeptide is 1-deoxy-D-xylulose 5-phosphate reductoisomerase (Bacillus licheniformis (strain ATCC 14580 / DSM 13 / JCM 2505 / CCUG 7422 / NBRC 12200 / NCIMB 9375 / NCTC 10341 / NRRL NRS-1264 / Gibson 46)).